The sequence spans 94 residues: Large ribosomal subunit protein uL23 (94 aa).

The protein belongs to the universal ribosomal protein uL23 family. Part of the 50S ribosomal subunit. Contacts protein L29, and trigger factor when it is bound to the ribosome.

Functionally, one of the early assembly proteins it binds 23S rRNA. One of the proteins that surrounds the polypeptide exit tunnel on the outside of the ribosome. Forms the main docking site for trigger factor binding to the ribosome. The sequence is that of Large ribosomal subunit protein uL23 from Roseiflexus sp. (strain RS-1).